The following is a 345-amino-acid chain: Phosphoribosylformylglycinamidine cyclo-ligase (345 aa).

The protein belongs to the AIR synthase family.

The protein resides in the cytoplasm. It carries out the reaction 2-formamido-N(1)-(5-O-phospho-beta-D-ribosyl)acetamidine + ATP = 5-amino-1-(5-phospho-beta-D-ribosyl)imidazole + ADP + phosphate + H(+). Its pathway is purine metabolism; IMP biosynthesis via de novo pathway; 5-amino-1-(5-phospho-D-ribosyl)imidazole from N(2)-formyl-N(1)-(5-phospho-D-ribosyl)glycinamide: step 2/2. The sequence is that of Phosphoribosylformylglycinamidine cyclo-ligase from Aeromonas hydrophila subsp. hydrophila (strain ATCC 7966 / DSM 30187 / BCRC 13018 / CCUG 14551 / JCM 1027 / KCTC 2358 / NCIMB 9240 / NCTC 8049).